An 81-amino-acid chain; its full sequence is Sulfur carrier protein TusA (81 aa).

C19 (cysteine persulfide intermediate) is an active-site residue.

Belongs to the sulfur carrier protein TusA family. Interacts with IscS.

It localises to the cytoplasm. Its pathway is tRNA modification. Functionally, sulfur carrier protein involved in sulfur trafficking in the cell. Part of a sulfur-relay system required for 2-thiolation during synthesis of 2-thiouridine of the modified wobble base 5-methylaminomethyl-2-thiouridine (mnm(5)s(2)U) in tRNA. Interacts with IscS and stimulates its cysteine desulfurase activity. Accepts an activated sulfur from IscS, which is then transferred to TusD, and thus determines the direction of sulfur flow from IscS to 2-thiouridine formation. Also appears to be involved in sulfur transfer for the biosynthesis of molybdopterin. In Klebsiella pneumoniae subsp. pneumoniae (strain ATCC 700721 / MGH 78578), this protein is Sulfur carrier protein TusA.